A 598-amino-acid polypeptide reads, in one-letter code: Arginine--tRNA ligase (598 aa).

The 'HIGH' region signature appears at 139–149 (ANPTGPMHVGH).

It belongs to the class-I aminoacyl-tRNA synthetase family. Monomer.

It localises to the cytoplasm. The enzyme catalyses tRNA(Arg) + L-arginine + ATP = L-arginyl-tRNA(Arg) + AMP + diphosphate. This Bradyrhizobium sp. (strain BTAi1 / ATCC BAA-1182) protein is Arginine--tRNA ligase.